Reading from the N-terminus, the 510-residue chain is DNA nucleotidylexotransferase (510 aa).

The short motif at 11–17 (PRRKQPK) is the Nuclear localization signal element. Positions 27–124 (KYDIKFKDIA…QPVEIERKHR (98 aa)) constitute a BRCT domain. The tract at residues 254 to 258 (VGLRT) is involved in DNA binding. Residues 329–334 (GFRRGN) and 338–341 (HDVD) contribute to the a 2'-deoxyribonucleoside 5'-triphosphate site. Asp-339, Asp-341, and Asp-434 together coordinate Mg(2+). 449 to 450 (GW) is a binding site for a 2'-deoxyribonucleoside 5'-triphosphate.

This sequence belongs to the DNA polymerase type-X family. Mg(2+) is required as a cofactor.

The protein resides in the nucleus. It catalyses the reaction DNA(n) + a 2'-deoxyribonucleoside 5'-triphosphate = DNA(n+1) + diphosphate. Its function is as follows. Template-independent DNA polymerase which catalyzes the random addition of deoxynucleoside 5'-triphosphate to the 3'-end of a DNA initiator. One of the in vivo functions of this enzyme is the addition of nucleotides at the junction (N region) of rearranged Ig heavy chain and T-cell receptor gene segments during the maturation of B- and T-cells. The sequence is that of DNA nucleotidylexotransferase (DNTT) from Ambystoma mexicanum (Axolotl).